The sequence spans 172 residues: Large ribosomal subunit protein uL10 (172 aa).

This sequence belongs to the universal ribosomal protein uL10 family. In terms of assembly, part of the ribosomal stalk of the 50S ribosomal subunit. The N-terminus interacts with L11 and the large rRNA to form the base of the stalk. The C-terminus forms an elongated spine to which L12 dimers bind in a sequential fashion forming a multimeric L10(L12)X complex.

In terms of biological role, forms part of the ribosomal stalk, playing a central role in the interaction of the ribosome with GTP-bound translation factors. The polypeptide is Large ribosomal subunit protein uL10 (Dinoroseobacter shibae (strain DSM 16493 / NCIMB 14021 / DFL 12)).